Consider the following 921-residue polypeptide: MVIGLLKTLVGSRNDRLLKQYRKVVAKVGTFEANLQTLDDAALAAKTDEFKSRLASGESLDSIAPEAFAVVREASVRVMKMRHFDAQLMGGLALHQGKIAEMGTGEGKTLTATLPVYLNALTGKGVHVVTVNDYLAQRDAEWMSTLYNFLGMKVGVNLSQMDHTTKKEAYAADITYGTNNEFGFDYLRDNMVQDLEQRVQRGLAYAIVDEVDSILIDEARTPLIISGQADDHTDLYIKINALPSHLELQIGEEKSDGTGVEKPGDYWVDEKSQQVYLTERGHDKAEEVLVQLGALDDGASLYAPQNITLMHHVYAALRAHTLYHRDQQYVVQNGEVIIVDEFTGRLMQGRRWSDGLHQAVEAKEGVAIQNENQTLATITFQNYFRMYGKLAGMTGTADTEAYEFKEIYNLETVVIPPNRISQRKDKQDQIYKSSRERYDAVIKDIEDCYQRGQPVLVGTTSIENSELIAGLLDKRKLPHQVLNAKQHAREAEIIAQAGRPKMITIATNMAGRGTDIVLGGNVGKQSSLIQVDEALSDLEKAAKIKSLQDEWQSIHDQVLTAGGLHIIGTERHESRRIDNQLRGRSGRQGDPGSSRFYLSLDDPLLRIFAGDRLRAVMERLKMPDGEPIEAGMVTRSIESAQRKVEGRNFDIRKQLLEYDDVANDQRKETYRLRNEVLESADIGELIANLREDVLRTICSIYVPLESMEEQWDLAGLEHALASEWGLKVDLQKWVEGSDSVDDVEIVDRVLEAAKESYDAKVDLSGRQSFAGFERSVLLYSVDTHWREHLAALDHLRQGIHLRGYAQKDPKQEYRREAFELYGELLNVIKNDVVKNIMTVEIRSASELDQAAESMNEDLAKLSDVQYQHADPDMEVAGSTGDRGAALDIQPAPVRSGPKIGRNDPCSCGSGKKYKNCCGALS.

ATP contacts are provided by residues Q87, 105-109 (GEGKT), and D515. The interval 872–901 (DMEVAGSTGDRGAALDIQPAPVRSGPKIGR) is disordered. Zn(2+) contacts are provided by C905, C907, C916, and C917.

It belongs to the SecA family. Monomer and homodimer. Part of the essential Sec protein translocation apparatus which comprises SecA, SecYEG and auxiliary proteins SecDF-YajC and YidC. It depends on Zn(2+) as a cofactor.

The protein resides in the cell inner membrane. Its subcellular location is the cytoplasm. The catalysed reaction is ATP + H2O + cellular proteinSide 1 = ADP + phosphate + cellular proteinSide 2.. In terms of biological role, part of the Sec protein translocase complex. Interacts with the SecYEG preprotein conducting channel. Has a central role in coupling the hydrolysis of ATP to the transfer of proteins into and across the cell membrane, serving both as a receptor for the preprotein-SecB complex and as an ATP-driven molecular motor driving the stepwise translocation of polypeptide chains across the membrane. The chain is Protein translocase subunit SecA from Polynucleobacter asymbioticus (strain DSM 18221 / CIP 109841 / QLW-P1DMWA-1) (Polynucleobacter necessarius subsp. asymbioticus).